The following is a 366-amino-acid chain: Chorismate synthase (366 aa).

Arg-48 is a binding site for NADP(+). Residues 125–127 (RSS), 238–239 (NA), Gly-278, 293–297 (KPTSS), and Arg-319 each bind FMN.

The protein belongs to the chorismate synthase family. In terms of assembly, homotetramer. FMNH2 serves as cofactor.

It carries out the reaction 5-O-(1-carboxyvinyl)-3-phosphoshikimate = chorismate + phosphate. It participates in metabolic intermediate biosynthesis; chorismate biosynthesis; chorismate from D-erythrose 4-phosphate and phosphoenolpyruvate: step 7/7. Functionally, catalyzes the anti-1,4-elimination of the C-3 phosphate and the C-6 proR hydrogen from 5-enolpyruvylshikimate-3-phosphate (EPSP) to yield chorismate, which is the branch point compound that serves as the starting substrate for the three terminal pathways of aromatic amino acid biosynthesis. This reaction introduces a second double bond into the aromatic ring system. The protein is Chorismate synthase of Alkalilimnicola ehrlichii (strain ATCC BAA-1101 / DSM 17681 / MLHE-1).